The primary structure comprises 335 residues: Tetraacyldisaccharide 4'-kinase (335 aa).

59-66 is an ATP binding site; sequence TAGGNGKT.

It belongs to the LpxK family.

It carries out the reaction a lipid A disaccharide + ATP = a lipid IVA + ADP + H(+). It functions in the pathway glycolipid biosynthesis; lipid IV(A) biosynthesis; lipid IV(A) from (3R)-3-hydroxytetradecanoyl-[acyl-carrier-protein] and UDP-N-acetyl-alpha-D-glucosamine: step 6/6. Its function is as follows. Transfers the gamma-phosphate of ATP to the 4'-position of a tetraacyldisaccharide 1-phosphate intermediate (termed DS-1-P) to form tetraacyldisaccharide 1,4'-bis-phosphate (lipid IVA). The sequence is that of Tetraacyldisaccharide 4'-kinase from Vibrio cholerae serotype O1 (strain ATCC 39541 / Classical Ogawa 395 / O395).